Reading from the N-terminus, the 242-residue chain is MAETEALSKLREDFRMQNKSVFILGASGETGRVLLKEILEQGLFSKVTLIGRRKLTFDEEAYKNVNQEVVDFEKLDDYASAFQGHDVGFCCLGTTRGKAGAEGFVRVDRDYVLKSAELAKAGGCKHFNLLSSKGADKSSNFLYLQVKGEVEAKVEELKFDRYSVFRPGVLLCDRQESRPGEWLVRKFFGSLPDSWASGHSVPVVTVVRAMLNNVVRPRDKQMELLENKAIHDLGKAHGSLKP.

Residue A2 is modified to N-acetylalanine. The tract at residues 2–25 is required for interaction with elongation factor EEF1A1; it reads AETEALSKLREDFRMQNKSVFILG. Residues S27, G28, E29, T30, R52, R53, L92, G93, Y143, K147, L170, and R178 each coordinate NADPH. The active-site Proton acceptor is the Y143. Residue K147 is part of the active site.

As to quaternary structure, monomer. Forms homodimers during oxidative stress. Interacts (via N-terminus) with elongation factor EEF1A1 (via middle-region); the interaction is direct and competes with EEF1A1 binding to guanyl-nucleotide exchange factor EEF1B2, thereby inhibiting GDP for GTP exchange and reactivation of EEF1A1. Interacts with nuclear transport receptors XPO4, IPO5/RANBP5, IPO7, IPO9 and KPNB1 as well as GCN1L1/GCN1 and LRPPRC probably through their HEAT repeats. Binds NCOA5/CIA. In terms of assembly, interacts (via N-terminus) with proteasome subunit PSMD4/s5a. (Microbial infection) Interacts with HIV-1 Tat (via activation domain). In terms of tissue distribution, high levels in liver, lung, skeletal muscle, pancreas and placenta. Moderate levels in heart and kidney. Low levels in brain. Not expressed or low levels in variant small cell lung carcinomas, 33% of hepatocellular carcinomas and neuroblastomas. Levels are reduced in the heart of patients with hypertrophic cardiomyopathy and failing hearts.

Its subcellular location is the cytoplasm. Functionally, represses translation by preventing reactivation of elongation factor eEF1A. May also inhibit nuclear import by competing with nuclear import substrates for binding to a subset of nuclear transport receptors. Has additionally been proposed to act as a redox sensor involved in cellular oxidative stress surveillance. The polypeptide is Protein HTATIP2 (Homo sapiens (Human)).